Consider the following 440-residue polypeptide: V-type ATP synthase beta chain (440 aa).

Belongs to the ATPase alpha/beta chains family.

Produces ATP from ADP in the presence of a proton gradient across the membrane. The V-type beta chain is a regulatory subunit. This is V-type ATP synthase beta chain from Geotalea uraniireducens (strain Rf4) (Geobacter uraniireducens).